We begin with the raw amino-acid sequence, 435 residues long: Chaperone SurA (435 aa).

An N-terminal signal peptide occupies residues 1-29; that stretch reads MINKTLHTKHTLLGLLAMAVLMIPVWSQA. PpiC domains are found at residues 180 to 281 and 290 to 390; these read QEDF…KMID and VTQY…RVDD.

Its subcellular location is the periplasm. The enzyme catalyses [protein]-peptidylproline (omega=180) = [protein]-peptidylproline (omega=0). Chaperone involved in the correct folding and assembly of outer membrane proteins. Recognizes specific patterns of aromatic residues and the orientation of their side chains, which are found more frequently in integral outer membrane proteins. May act in both early periplasmic and late outer membrane-associated steps of protein maturation. The polypeptide is Chaperone SurA (Alcanivorax borkumensis (strain ATCC 700651 / DSM 11573 / NCIMB 13689 / SK2)).